A 146-amino-acid chain; its full sequence is Hemoglobin subunit beta (146 aa).

The residue at position 1 (valine 1) is an N-acetylvaline. In terms of domain architecture, Globin spans 2–146 (HLTAAEKSAI…VANALAHKYH (145 aa)). Histidine 63 is a heme b binding site. Lysine 82 carries the post-translational modification N6-acetyllysine. Histidine 92 lines the heme b pocket. The residue at position 93 (cysteine 93) is an S-nitrosocysteine. Residue lysine 144 is modified to N6-acetyllysine.

The protein belongs to the globin family. As to quaternary structure, heterotetramer of two alpha chains and two beta chains. As to expression, red blood cells.

Involved in oxygen transport from the lung to the various peripheral tissues. This is Hemoglobin subunit beta (HBB) from Cavia porcellus (Guinea pig).